A 118-amino-acid chain; its full sequence is Large ribosomal subunit protein bL19 (118 aa).

The protein belongs to the bacterial ribosomal protein bL19 family.

In terms of biological role, this protein is located at the 30S-50S ribosomal subunit interface and may play a role in the structure and function of the aminoacyl-tRNA binding site. The protein is Large ribosomal subunit protein bL19 of Campylobacter fetus subsp. fetus (strain 82-40).